Reading from the N-terminus, the 111-residue chain is Probable 4-amino-4-deoxy-L-arabinose-phosphoundecaprenol flippase subunit ArnE (111 aa).

3 consecutive transmembrane segments (helical) span residues 38–58 (LWLGLALICMGAAMVLWLLVL), 61–81 (LPVGIAYPMLSLNFVWVTLAA), and 91–111 (PRHWFGVALIISGIIILGSAA). The 70-residue stretch at 40–109 (LGLALICMGA…IISGIIILGS (70 aa)) folds into the EamA domain.

Belongs to the ArnE family. In terms of assembly, heterodimer of ArnE and ArnF.

Its subcellular location is the cell inner membrane. It participates in bacterial outer membrane biogenesis; lipopolysaccharide biosynthesis. Functionally, translocates 4-amino-4-deoxy-L-arabinose-phosphoundecaprenol (alpha-L-Ara4N-phosphoundecaprenol) from the cytoplasmic to the periplasmic side of the inner membrane. The chain is Probable 4-amino-4-deoxy-L-arabinose-phosphoundecaprenol flippase subunit ArnE from Salmonella enteritidis PT4 (strain P125109).